Here is an 88-residue protein sequence, read N- to C-terminus: Large ribosomal subunit protein bL27 (88 aa).

The tract at residues 1-23 (MAHKKGTGSTRNGRDSNAQRLGV) is disordered. Positions 7–19 (TGSTRNGRDSNAQ) are enriched in polar residues.

Belongs to the bacterial ribosomal protein bL27 family.

This Synechococcus elongatus (strain ATCC 33912 / PCC 7942 / FACHB-805) (Anacystis nidulans R2) protein is Large ribosomal subunit protein bL27 (rpmA).